The chain runs to 240 residues: CRISPR system aCascade subunit Cas5 1 (240 aa).

The protein belongs to the CRISPR-associated protein Cas5 family. Subtype I-A/Apern subfamily. As to quaternary structure, part of the aCascade ribonucleoprotein complex, minimally composed of Csa2 and Cas5a, which binds crRNA. Other possible components of aCascade in strain P1 are Cas6b (SSO1437) and Csa5 (SSO1443), while SSO1399, Cas5b (SSO1400) and SSO1401 have sometimes been seen weakly associated. Csa2 is probably the major RNA-binding subunit. The Csa2-Cas5a-crRNA complex also binds target DNA homologous to crRNA, probably forming an R-loop. Purified aCascade forms a filament about 6 nm in width.

Its function is as follows. CRISPR (clustered regularly interspaced short palindromic repeat) is an adaptive immune system that provides protection against mobile genetic elements (viruses, transposable elements and conjugative plasmids). CRISPR clusters contain spacers, sequences complementary to antecedent mobile elements, and target invading nucleic acids. CRISPR clusters are transcribed and processed into CRISPR RNA (crRNA). The sequence is that of CRISPR system aCascade subunit Cas5 1 (cas5a) from Saccharolobus solfataricus (strain ATCC 35092 / DSM 1617 / JCM 11322 / P2) (Sulfolobus solfataricus).